Here is a 252-residue protein sequence, read N- to C-terminus: Phosphomannomutase (252 aa).

Asp13 (nucleophile) is an active-site residue. Mg(2+) contacts are provided by Asp13 and Asp15. Asp15 acts as the Proton donor/acceptor in catalysis. 6 residues coordinate alpha-D-mannose 1-phosphate: Arg22, Arg124, Arg135, Arg142, Ser180, and Asp182. Positions 208, 220, and 225 each coordinate Mg(2+).

The protein belongs to the eukaryotic PMM family. As to quaternary structure, homodimer. Mg(2+) serves as cofactor. Expressed in roots, leaves, stems and flowers.

It localises to the cytoplasm. It carries out the reaction alpha-D-mannose 1-phosphate = D-mannose 6-phosphate. Its pathway is nucleotide-sugar biosynthesis; GDP-alpha-D-mannose biosynthesis; alpha-D-mannose 1-phosphate from D-fructose 6-phosphate: step 2/2. Its function is as follows. Catalyzes the interconversion of mannose-6-phosphate to mannose-1-phosphate, the precursor for the synthesis of GDP-mannose. GDP-mannose is an essential sugar nucleotide for the synthesis of D-mannose-containing cell wall polysaccharides (galactomannans and glucomannans), glycolipids, glycoproteins and the antioxidant L-ascorbate. Involved in the biosynthesis of ascorbate and polysaccharides in response to abiotic stress during seed germination. This is Phosphomannomutase from Dendrobium officinale (Orchid).